We begin with the raw amino-acid sequence, 140 residues long: Cysteine proteinase inhibitor 1 (140 aa).

An N-terminal signal peptide occupies residues 1–26 (MRKYRVAGLVAALLVLHSLATPSAQA). A Cystatin domain is found at 48–135 (GGVEPVGNEN…KELQEFKPVD (88 aa)). Residues 91–95 (QVVAG) carry the Secondary area of contact motif.

Belongs to the cystatin family. Phytocystatin subfamily.

It localises to the secreted. Functionally, there are two distinct cystatins in rice seeds (Oryzacystatin-1 and -2) with different specificities against cysteine proteinases. May be involved in the control of germination by inhibition of endogenous cysteine proteinases. May play a role in defense by inhibiting exogenous proteases such as those present in digestive tracks of insects and nematodes. In Oryza sativa subsp. japonica (Rice), this protein is Cysteine proteinase inhibitor 1.